We begin with the raw amino-acid sequence, 719 residues long: MKLLKKSSSLKKGVTKRAKLQKKPPSKDEASSSDEELAKLDGEGSLDGNESEEDDGTVQVEKGGMKKHKLDLEALKKSDPEFFKFLQQEDADLLNMEEDEDDDEEGEDNEDEEDEEEEEESDEDDDEEDDDKTKIKKIRKPKVKSDSSGRLIVDSNVYSYLQQVLVLDDETTTPINPSDVRMAIDVFVACVARVGADIEAPKYVINEQSIFEAVVRMCFQAMPDVLKRLLKARPDGEKVLFSKTMIKKYQTYVRTYLHAMIVFLNEVQTTEVIIATLKAITRLVDLYAHFSRMSKLLIKAIVKIWSRKTLECRLPAFVCMNLLVKNYPQHFVPLYKTAYVAFVANSKVVTNETWPLLQFMHRTFAEITMINPEQAYKYAFVYIRQTAVHLRNAMIAKGRKDLIFSIYNWQMMQCMYMWVRVIAKAHSVNGAEQIGELVYPLIQVIVGIFKLCNAPTFLPLRLHCCQMLIQLQASCTNYIPIMQLSCDCLEELARELKSKPKPAKGAVKLPDIECTLKCSTQYSDLPQWRKTISEHVFRTMMQSAHLLASQAAFPDVALPINHRIATILDTMKNADQAHLFRGFQTKLKEHSRFVLDVLARKHVDLNDEMQVRAVRFDLNNPDSPIKSFYRQWEKVWKMKEKSALENSKKDDKKKKKEEEAAKKRKATETLEDDDDEDAKPTIPKAKRKRIKIGAAAKRADATVPDQFADMSLANWSDED.

The span at 1 to 24 shows a compositional bias: basic residues; that stretch reads MKLLKKSSSLKKGVTKRAKLQKKP. Disordered stretches follow at residues 1–67, 86–136, and 643–719; these read MKLL…GMKK, LQQE…TKIK, and ALEN…SDED. Residues 25–42 show a composition bias toward basic and acidic residues; sequence PSKDEASSSDEELAKLDG. Acidic residues predominate over residues 89–130; it reads EDADLLNMEEDEDDDEEGEDNEDEEDEEEEEESDEDDDEEDD. Over residues 643-661 the composition is skewed to basic and acidic residues; it reads ALENSKKDDKKKKKEEEAA.

Belongs to the NOC2 family.

The protein resides in the nucleus. In terms of biological role, required for normal somatic gonad development and for regulation of germline development and proliferation. This Caenorhabditis briggsae protein is Nucleolar complex protein 2 homolog (pro-2).